A 231-amino-acid chain; its full sequence is Ion-translocating oxidoreductase complex subunit E (231 aa).

Transmembrane regions (helical) follow at residues 18-38 (ALVQ…ATNA), 39-59 (LGLG…ISTL), 63-83 (TPAE…VSAV), 86-106 (LINA…PLIV), 125-145 (ALSA…MFVL), and 182-202 (PFLL…MLAG).

This sequence belongs to the NqrDE/RnfAE family. As to quaternary structure, the complex is composed of six subunits: RsxA, RsxB, RsxC, RsxD, RsxE and RsxG.

The protein localises to the cell inner membrane. In terms of biological role, part of a membrane-bound complex that couples electron transfer with translocation of ions across the membrane. Required to maintain the reduced state of SoxR. The sequence is that of Ion-translocating oxidoreductase complex subunit E from Escherichia coli O127:H6 (strain E2348/69 / EPEC).